The sequence spans 277 residues: Putative phosphoenolpyruvate synthase regulatory protein (277 aa).

Gly-157–Thr-164 lines the ADP pocket.

Belongs to the pyruvate, phosphate/water dikinase regulatory protein family. PSRP subfamily.

The enzyme catalyses [pyruvate, water dikinase] + ADP = [pyruvate, water dikinase]-phosphate + AMP + H(+). It carries out the reaction [pyruvate, water dikinase]-phosphate + phosphate + H(+) = [pyruvate, water dikinase] + diphosphate. Bifunctional serine/threonine kinase and phosphorylase involved in the regulation of the phosphoenolpyruvate synthase (PEPS) by catalyzing its phosphorylation/dephosphorylation. The polypeptide is Putative phosphoenolpyruvate synthase regulatory protein (Klebsiella pneumoniae subsp. pneumoniae (strain ATCC 700721 / MGH 78578)).